Consider the following 228-residue polypeptide: uncharacterized protein (228 aa).

2 disordered regions span residues 1–62 and 160–228; these read MQRP…VGRF and SPRP…LSGV. Positions 13–33 are enriched in low complexity; that stretch reads AASTRAPPRPSAPQQGRRQPS. Polar residues predominate over residues 167–176; sequence RGQQVTQDGP.

This is an uncharacterized protein from Homo sapiens (Human).